The sequence spans 259 residues: 3-hydroxypropionyl-coenzyme A dehydratase (259 aa).

Glutamate 113 acts as the Nucleophile in catalysis. Glutamate 133 acts as the Proton acceptor in catalysis.

This sequence belongs to the enoyl-CoA hydratase/isomerase family. Monomer.

It carries out the reaction 3-hydroxypropanoyl-CoA = acryloyl-CoA + H2O. In terms of biological role, plays a role in autotrophic carbon fixation via the 3-hydroxypropionate/4-hydroxybutyrate cycle. Catalyzes the reversible dehydration of 3-hydroxypropionyl-CoA to form acryloyl-CoA, and the reversible dehydration of (S)-3-hydroxybutyryl-CoA to form crotonyl-CoA. Inactive towards (R)-3-hydroxybutyryl-CoA. The protein is 3-hydroxypropionyl-coenzyme A dehydratase of Metallosphaera sedula (strain ATCC 51363 / DSM 5348 / JCM 9185 / NBRC 15509 / TH2).